A 294-amino-acid polypeptide reads, in one-letter code: MKPFLRWCFVATALTLAGCSNSAWRKSEVLAVPLQPTLQQEVILARMEQILASRALTDDERAQLLYERGVLYDSLGLRALARNDFSQALAIRPDMPEVFNYLGIYLTQAGNFDAAYEAFDSVLELDPTYNYAHLNRGIALYYGGRDKLAQDDLLAFYQDDPNDPYRSLWLYLVEQKLNEKQAKEALKARFEKSDKEQWGWNIVEFYLGDISEATLMERLKADATDNTSLAEHLSETNFYLGKYYLSLGDLDSATALFKLAVANNVHNFVEHRYALLELSLLGQDQDDLAESDQQ.

Positions 1-18 are cleaved as a signal peptide; sequence MKPFLRWCFVATALTLAG. Cys19 carries the N-palmitoyl cysteine lipid modification. The S-diacylglycerol cysteine moiety is linked to residue Cys19. 3 TPR repeats span residues 62–95, 96–129, and 234–267; these read AQLL…RPDM, PEVF…DPTY, and SETN…NVHN.

In terms of assembly, homodimer.

The protein resides in the cell membrane. Its function is as follows. May be involved in cell division. May play a role in bacterial septation or regulation of cell wall degradation during cell division. The sequence is that of Lipoprotein NlpI (nlpI) from Salmonella choleraesuis (strain SC-B67).